Here is a 657-residue protein sequence, read N- to C-terminus: tRNA 5-methylaminomethyl-2-thiouridine biosynthesis bifunctional protein MnmC (657 aa).

The tRNA (mnm(5)s(2)U34)-methyltransferase stretch occupies residues 1 to 239 (MTDRIVPATL…KRAMLVGEFA (239 aa)). Positions 263–657 (IGAGLAGCAV…VRALRHGRVA (395 aa)) are FAD-dependent cmnm(5)s(2)U34 oxidoreductase.

It in the N-terminal section; belongs to the methyltransferase superfamily. tRNA (mnm(5)s(2)U34)-methyltransferase family. In the C-terminal section; belongs to the DAO family. The cofactor is FAD.

The protein resides in the cytoplasm. It catalyses the reaction 5-aminomethyl-2-thiouridine(34) in tRNA + S-adenosyl-L-methionine = 5-methylaminomethyl-2-thiouridine(34) in tRNA + S-adenosyl-L-homocysteine + H(+). Catalyzes the last two steps in the biosynthesis of 5-methylaminomethyl-2-thiouridine (mnm(5)s(2)U) at the wobble position (U34) in tRNA. Catalyzes the FAD-dependent demodification of cmnm(5)s(2)U34 to nm(5)s(2)U34, followed by the transfer of a methyl group from S-adenosyl-L-methionine to nm(5)s(2)U34, to form mnm(5)s(2)U34. This chain is tRNA 5-methylaminomethyl-2-thiouridine biosynthesis bifunctional protein MnmC, found in Burkholderia pseudomallei (strain 668).